The primary structure comprises 283 residues: NAD kinase (283 aa).

The active-site Proton acceptor is the Asp-67. NAD(+) contacts are provided by residues Asp-67–Gly-68, Asn-141–Asp-142, Arg-152, Asp-171, Thr-182–Ser-187, and Gln-241.

The protein belongs to the NAD kinase family. Requires a divalent metal cation as cofactor.

Its subcellular location is the cytoplasm. The enzyme catalyses NAD(+) + ATP = ADP + NADP(+) + H(+). In terms of biological role, involved in the regulation of the intracellular balance of NAD and NADP, and is a key enzyme in the biosynthesis of NADP. Catalyzes specifically the phosphorylation on 2'-hydroxyl of the adenosine moiety of NAD to yield NADP. This chain is NAD kinase, found in Heliobacterium modesticaldum (strain ATCC 51547 / Ice1).